A 519-amino-acid chain; its full sequence is Serine/threonine-protein kinase RIO3 (519 aa).

S8 and S112 each carry phosphoserine. Phosphotyrosine is present on Y122. The disordered stretch occupies residues 122–159 (YEDSDSSEDEVDWQDTRDDPYRPAKPIPTPKKGFIGKG). Positions 124–134 (DSDSSEDEVDW) are enriched in acidic residues. 3 positions are modified to phosphoserine: S125, S127, and S128. The Protein kinase domain maps to 251–519 (ETITGCISTG…DGGPPILYDE (269 aa)). ATP-binding positions include 257–265 (ISTGKESVV) and K290. Residue D406 is the Proton acceptor of the active site.

The protein belongs to the protein kinase superfamily. RIO-type Ser/Thr kinase family. As to quaternary structure, interacts with CASP10. Interacts with IRF3; RIOK3 probably mediates the interaction of TBK1 with IRF3. Associated with 40S pre-ribosomal particles. It depends on Mg(2+) as a cofactor. Post-translationally, autophosphorylated (in vitro).

The protein localises to the cytoplasm. It catalyses the reaction L-seryl-[protein] + ATP = O-phospho-L-seryl-[protein] + ADP + H(+). It carries out the reaction L-threonyl-[protein] + ATP = O-phospho-L-threonyl-[protein] + ADP + H(+). In terms of biological role, involved in regulation of type I interferon (IFN)-dependent immune response which plays a critical role in the innate immune response against DNA and RNA viruses. May act as an adapter protein essential for the recruitment of TBK1 to IRF3. Phosphorylates IFIH1 within the C-terminal region interfering with IFIH1 filament assembly on long dsRNA and resulting in attenuated IFIH1-signaling. Can inhibit CASP10 isoform 7-mediated activation of the NF-kappaB signaling pathway. May play a role in the biogenesis of the 40S ribosomal subunit. Involved in the processing of 21S pre-rRNA to the mature 18S rRNA. The sequence is that of Serine/threonine-protein kinase RIO3 (RIOK3) from Bos taurus (Bovine).